We begin with the raw amino-acid sequence, 1606 residues long: Thrombospondin type-1 domain-containing protein 7B (1606 aa).

The N-terminal stretch at M1 to A31 is a signal peptide. The Extracellular portion of the chain corresponds to A32 to K1555. 18 TSP type-1 domains span residues N40–D98, D102–P177, D179–P233, D336–G392, P399–S482, D484–Y543, D601–M661, Q662–K735, D737–P796, V797–R869, D871–D924, E925–P998, D1000–P1125, E1127–F1181, Q1182–V1245, N1247–Y1302, S1303–P1368, and D1370–Y1431. 3 N-linked (GlcNAc...) asparagine glycosylation sites follow: N150, N190, and N219. 3 disulfide bridges follow: C411/C477, C431/C481, and C442/C466. Disulfide bonds link C602–C643, C613–C617, and C655–C660. Residue N683 is glycosylated (N-linked (GlcNAc...) asparagine). 3 disulfides stabilise this stretch: C738-C779, C749-C753, and C789-C795. Residue N757 is glycosylated (N-linked (GlcNAc...) asparagine). Residue N842 is glycosylated (N-linked (GlcNAc...) asparagine). Intrachain disulfides connect C872–C907, C883–C887, and C921–C923. N-linked (GlcNAc...) asparagine glycosylation occurs at N933. Disulfide bonds link C937–C993, C959–C997, C970–C983, C1001–C1038, C1012–C1016, and C1120–C1124. An N-linked (GlcNAc...) asparagine glycan is attached at N1186. Disulfide bonds link C1248-C1286, C1259-C1263, and C1296-C1301. Residue N1308 is glycosylated (N-linked (GlcNAc...) asparagine). 3 cysteine pairs are disulfide-bonded: C1371/C1415, C1382/C1386, and C1425/C1430. Residues N1456 and N1524 are each glycosylated (N-linked (GlcNAc...) asparagine). The chain crosses the membrane as a helical span at residues I1556–S1576. Topologically, residues Y1577 to M1606 are cytoplasmic. A disordered region spans residues P1583–M1606. The span at H1586–P1595 shows a compositional bias: polar residues.

It localises to the membrane. The protein is Thrombospondin type-1 domain-containing protein 7B of Homo sapiens (Human).